We begin with the raw amino-acid sequence, 215 residues long: uncharacterized protein (215 aa).

Positions 120 to 147 are disordered; the sequence is HRAPQGTSSYQEGRRAHEATSAESDDDN.

This is an uncharacterized protein from Homo sapiens (Human).